We begin with the raw amino-acid sequence, 338 residues long: Alcohol dehydrogenase (338 aa).

Zn(2+) is bound by residues Cys38, His61, Glu62, Cys92, Cys95, Cys98, Cys106, and Cys148.

It belongs to the zinc-containing alcohol dehydrogenase family. As to quaternary structure, homotetramer. It depends on Zn(2+) as a cofactor.

It carries out the reaction a primary alcohol + NAD(+) = an aldehyde + NADH + H(+). The catalysed reaction is a secondary alcohol + NAD(+) = a ketone + NADH + H(+). It catalyses the reaction ethanol + NAD(+) = acetaldehyde + NADH + H(+). The enzyme catalyses 1-propanol + NAD(+) = propanal + NADH + H(+). It carries out the reaction butan-1-ol + NAD(+) = butanal + NADH + H(+). The catalysed reaction is propan-2-ol + NAD(+) = acetone + NADH + H(+). Functionally, psychrophilic alcohol dehydrogenase that exhibits a wide range of substrate specificity, oxidizing mainly primary and secondary aliphatic alcohols, utilizing NAD(+) as a cosubstrate. In vitro, shows highest reaction rates for ethanol as a substrate and gradually decreases its reaction rates as the length and branching of the carbon chain of the alcohol substrates increase. To a lesser extent, is also able to reduce aldehydes and ketones. Do not catalyze the further oxidation of aldehydes to carboxylic acids. Cannot use NADP(+) instead of NAD(+). The sequence is that of Alcohol dehydrogenase from Moraxella sp. (strain TAE123).